Reading from the N-terminus, the 554-residue chain is MASSQVGDMVNGNAEPTRHLAKFPPSLWGDRFTSFTLDKQLWDKYGNEIEVLKEQVRSMVVAGGRKAAEQINLINVLERLGVSYHFEKEIEEQLEQLFAKFEDNEDYDLFTIALHFRIFRQHGYKMSCDVFNKFRDSNCEFKETVSNDVQGMLSLYEATYLKIRGEGFLDEAHAFTIAQLESLVEGPHLSSDLSEQVMHALKQSIHRGFPRLEAKHFISFYEKDASRNETLLRLAKLDFNQLQLSHREELCHIFRWWKELDLISKVPYARDRAVECFFWSTCAYYEPQHSVGRAGLTKIMLLLSVTDDTYDAYGTYNELKLYTNAVQRWDVSAMDELPDYMKALYRALLNVYDEVERDLAKQGRAYGVHHSKEAFKEIVRSYEIEAEWFKEGYVASFEEYMKNALVTSTGRLHTTSCFMGLEADVATTEAFEWILTKPKMVAASGAIGRLVDDVMSHDEEQERGHVATGLDCYMKQHGVSKQEAIVELYKMIENAWRDINEEMLKPTAISMKLLIRVLNLSRISDVVYKYVDGYTHPEIINDHVISLFEDPIPM.

2 residues coordinate Mg(2+): D307 and D311. The short motif at 326–330 is the DDXXD motif element; it reads VQRWD. The Mg(2+) site is built by D452, S456, and E460.

It belongs to the terpene synthase family. Mg(2+) serves as cofactor.

It carries out the reaction (2E,6E)-farnesyl diphosphate + H2O = valerianol + diphosphate. Its pathway is secondary metabolite biosynthesis; terpenoid biosynthesis. Functionally, terpene synthase that catalyzes the biosynthesis of the terpene valerianol, which is a volatile compound of floral scent. The protein is Valerianol synthase TPS1F of Camellia hiemalis (Camellia).